The sequence spans 548 residues: Probable malate:quinone oxidoreductase (548 aa).

This sequence belongs to the MQO family. FAD is required as a cofactor.

The enzyme catalyses (S)-malate + a quinone = a quinol + oxaloacetate. It participates in carbohydrate metabolism; tricarboxylic acid cycle; oxaloacetate from (S)-malate (quinone route): step 1/1. The chain is Probable malate:quinone oxidoreductase from Escherichia coli (strain SE11).